Reading from the N-terminus, the 131-residue chain is Small ribosomal subunit protein uS8 (131 aa).

The protein belongs to the universal ribosomal protein uS8 family. In terms of assembly, part of the 30S ribosomal subunit. Contacts proteins S5 and S12.

In terms of biological role, one of the primary rRNA binding proteins, it binds directly to 16S rRNA central domain where it helps coordinate assembly of the platform of the 30S subunit. The protein is Small ribosomal subunit protein uS8 of Bacteroides fragilis (strain ATCC 25285 / DSM 2151 / CCUG 4856 / JCM 11019 / LMG 10263 / NCTC 9343 / Onslow / VPI 2553 / EN-2).